Here is a 775-residue protein sequence, read N- to C-terminus: Lon protease (775 aa).

Residues 6–207 (LPLMALRDIV…TIINILTSNI (202 aa)) enclose the Lon N-terminal domain. ATP is bound at residue 356–363 (GPPGVGKT). In terms of domain architecture, Lon proteolytic spans 592–773 (NDQIGSTTGL…DQVLEHALTK (182 aa)). Residues S679 and K722 contribute to the active site.

It belongs to the peptidase S16 family. In terms of assembly, homohexamer. Organized in a ring with a central cavity.

The protein resides in the cytoplasm. The catalysed reaction is Hydrolysis of proteins in presence of ATP.. Its function is as follows. ATP-dependent serine protease that mediates the selective degradation of mutant and abnormal proteins as well as certain short-lived regulatory proteins. Required for cellular homeostasis and for survival from DNA damage and developmental changes induced by stress. Degrades polypeptides processively to yield small peptide fragments that are 5 to 10 amino acids long. Binds to DNA in a double-stranded, site-specific manner. In Rickettsia bellii (strain RML369-C), this protein is Lon protease.